A 1006-amino-acid chain; its full sequence is Unconventional myosin-Id (1006 aa).

At alanine 2 the chain carries N-acetylalanine. A Myosin motor domain is found at 9 to 695 (FGKADFVLMD…TLFTLEELRA (687 aa)). Position 102–109 (102–109 (GESGAGKT)) interacts with ATP. Serine 200 carries the post-translational modification Phosphoserine. At tyrosine 536 the chain carries Phosphotyrosine. An actin-binding region spans residues 572–594 (MIALVDNLASKEPYYVRCIKPND). 2 IQ domains span residues 699 to 719 (VRVVLFLQKVWRGTLARMRYK) and 721 to 741 (TKAALTIIRYYRRYKVKSYIH). Residues 812-1005 (GQRADLGLQR…RSGFILSVPG (194 aa)) enclose the TH1 domain.

Belongs to the TRAFAC class myosin-kinesin ATPase superfamily. Myosin family. Interacts (via the two IQ motifs) with calmodulin. Binds an additional calmodulin chain via a third, C-terminal region. Interacts with F-actin. Detected in enterocytes at the intestinal brush border membrane. Detected at the tip of intestinal microvilli (at protein level).

Its subcellular location is the cytoplasm. It is found in the perikaryon. The protein localises to the cell projection. The protein resides in the dendrite. It localises to the early endosome. Its subcellular location is the cell cortex. It is found in the basolateral cell membrane. Its function is as follows. Unconventional myosin that functions as actin-based motor protein with ATPase activity. Plays a role in endosomal protein trafficking, and especially in the transfer of cargo proteins from early to recycling endosomes. Required for normal planar cell polarity in ciliated tracheal cells, for normal rotational polarity of cilia, and for coordinated, unidirectional ciliary movement in the trachea. Required for normal, polarized cilia organization in brain ependymal epithelial cells. This Mus musculus (Mouse) protein is Unconventional myosin-Id.